A 342-amino-acid chain; its full sequence is Probable dual-specificity RNA methyltransferase RlmN (342 aa).

Catalysis depends on Glu-91, which acts as the Proton acceptor. Residues 97-327 (YKHGNSICVS…TTIRREMGAD (231 aa)) form the Radical SAM core domain. Cys-104 and Cys-332 are joined by a disulfide. [4Fe-4S] cluster contacts are provided by Cys-111, Cys-115, and Cys-118. S-adenosyl-L-methionine contacts are provided by residues 158–159 (GE), Ser-190, 213–215 (SLH), and Asn-289. Cys-332 functions as the S-methylcysteine intermediate in the catalytic mechanism.

This sequence belongs to the radical SAM superfamily. RlmN family. It depends on [4Fe-4S] cluster as a cofactor.

The protein resides in the cytoplasm. It carries out the reaction adenosine(2503) in 23S rRNA + 2 reduced [2Fe-2S]-[ferredoxin] + 2 S-adenosyl-L-methionine = 2-methyladenosine(2503) in 23S rRNA + 5'-deoxyadenosine + L-methionine + 2 oxidized [2Fe-2S]-[ferredoxin] + S-adenosyl-L-homocysteine. It catalyses the reaction adenosine(37) in tRNA + 2 reduced [2Fe-2S]-[ferredoxin] + 2 S-adenosyl-L-methionine = 2-methyladenosine(37) in tRNA + 5'-deoxyadenosine + L-methionine + 2 oxidized [2Fe-2S]-[ferredoxin] + S-adenosyl-L-homocysteine. In terms of biological role, specifically methylates position 2 of adenine 2503 in 23S rRNA and position 2 of adenine 37 in tRNAs. The polypeptide is Probable dual-specificity RNA methyltransferase RlmN (Clostridium botulinum (strain Loch Maree / Type A3)).